A 321-amino-acid polypeptide reads, in one-letter code: Nucleotide-binding protein LI0459 (321 aa).

41–48 provides a ligand contact to ATP; sequence GMSGAGKS.

This sequence belongs to the RapZ-like family.

Its function is as follows. Displays ATPase and GTPase activities. The sequence is that of Nucleotide-binding protein LI0459 from Lawsonia intracellularis (strain PHE/MN1-00).